The following is a 271-amino-acid chain: Undecaprenyl-diphosphatase (271 aa).

8 consecutive transmembrane segments (helical) span residues 5–25, 45–65, 86–106, 114–134, 149–169, 189–209, 226–246, and 251–271; these read YALF…FLPV, AATF…AVFW, TLSL…GLAI, LFGP…LIIA, ISYK…WPGF, AAEF…GLDL, VGFI…LALI, and FIPF…VFVA.

The protein belongs to the UppP family.

The protein localises to the cell inner membrane. It catalyses the reaction di-trans,octa-cis-undecaprenyl diphosphate + H2O = di-trans,octa-cis-undecaprenyl phosphate + phosphate + H(+). In terms of biological role, catalyzes the dephosphorylation of undecaprenyl diphosphate (UPP). Confers resistance to bacitracin. This chain is Undecaprenyl-diphosphatase, found in Aeromonas hydrophila subsp. hydrophila (strain ATCC 7966 / DSM 30187 / BCRC 13018 / CCUG 14551 / JCM 1027 / KCTC 2358 / NCIMB 9240 / NCTC 8049).